A 1220-amino-acid polypeptide reads, in one-letter code: Plasma membrane calcium-transporting ATPase 1 (1220 aa).

Gly2 carries the post-translational modification N-acetylglycine. The Cytoplasmic portion of the chain corresponds to 2–105; sequence GDMANNSVAY…KTFLQLVWEA (104 aa). Residues Ser8 and Ser17 each carry the phosphoserine modification. Residues 106-126 form a helical membrane-spanning segment; sequence LQDVTLIILEIAAIVSLGLSF. At 127 to 154 the chain is on the extracellular side; it reads YQPPEGDNALCGEVSVGEEEGEGETGWI. A helical transmembrane segment spans residues 155 to 175; it reads EGAAILLSVVCVVLVTAFNDW. Topologically, residues 176–366 are cytoplasmic; that stretch reads SKEKQFRGLQ…KEKSVLQGKL (191 aa). Positions 297–356 are disordered; it reads EEEKKDEKKKEKKNKKQDGAIENRNKAKAQDGAAMEMQPLKSEEGGDGDEKDKKKANLPK. 2 stretches are compositionally biased toward basic and acidic residues: residues 312–325 and 337–356; these read KQDG…KAKA and KSEE…NLPK. Ser338 is subject to Phosphoserine. A helical transmembrane segment spans residues 367 to 386; sequence TKLAVQIGKAGLLMSAITVI. At 387 to 418 the chain is on the extracellular side; sequence ILVLYFVIDTFWVQKRPWLAECTPIYIQYFVK. The helical transmembrane segment at 419 to 439 threads the bilayer; that stretch reads FFIIGVTVLVVAVPEGLPLAV. Residues 440 to 855 lie on the Cytoplasmic side of the membrane; that stretch reads TISLAYSVKK…RNVYDSISKF (416 aa). The active-site 4-aspartylphosphate intermediate is the Asp475. 3 residues coordinate Mg(2+): Asp475, Thr477, and Asp797. A helical membrane pass occupies residues 856-876; that stretch reads LQFQLTVNVVAVIVAFTGACI. The Extracellular segment spans residues 877–882; it reads TQDSPL. Residues 883 to 903 form a helical membrane-spanning segment; that stretch reads KAVQMLWVNLIMDTLASLALA. Topologically, residues 904–927 are cytoplasmic; the sequence is TEPPTESLLLRKPYGRNKPLISRT. The helical transmembrane segment at 928–948 threads the bilayer; the sequence is MMKNILGHAFYQLVVVFTLLF. Topologically, residues 949–971 are extracellular; that stretch reads AGEKFFDIDSGRNAPLHAPPSEH. Residues 972 to 991 form a helical membrane-spanning segment; the sequence is YTIVFNTFVLMQLFNEINAR. At 992–1005 the chain is on the cytoplasmic side; sequence KIHGERNVFEGIFN. A helical transmembrane segment spans residues 1006–1027; the sequence is NAIFCTIVLGTFVVQIIIVQFG. At 1028-1039 the chain is on the extracellular side; the sequence is GKPFSCSELSIE. Residues 1040–1060 form a helical membrane-spanning segment; it reads QWLWSIFLGMGTLLWGQLIST. Topologically, residues 1061–1220 are cytoplasmic; the sequence is IPTSRLKFLK…SPLHSLETSL (160 aa). The interval 1100-1117 is calmodulin-binding subdomain A; it reads LRRGQILWFRGLNRIQTQ. Thr1116 is modified (phosphothreonine; by PKC). The required for basolateral membrane targeting stretch occupies residues 1118 to 1220; the sequence is IRVVNAFRSS…SPLHSLETSL (103 aa). 2 positions are modified to phosphoserine: Ser1140 and Ser1155. The interval 1160–1220 is disordered; that stretch reads PLIDDTDAED…SPLHSLETSL (61 aa). Residue Thr1165 is modified to Phosphothreonine. Ser1178 is modified (phosphoserine; by PKA). Ser1182 carries the post-translational modification Phosphoserine. Over residues 1200-1220 the composition is skewed to polar residues; sequence MNKSATSSSPGSPLHSLETSL.

The protein belongs to the cation transport ATPase (P-type) (TC 3.A.3) family. Type IIB subfamily. Monomer. Dimer. Oligomer. Calmodulin binding. Interacts with PDZD11. Interacts with SLC35G1 and STIM1; inhibits calcium-transporting ATPase activity after store depletion. Interacts with YWHAE; interacts with the monomeric and dimeric forms of the YWHAE but prefer the monomer form; this interaction inhibits calcium-transporting ATPase activity. Interacts with NPTN; this interaction stabilizes ATP2B1 and increases ATPase activity; this interaction controls T cell calcium homeostasis following T cell activation. Interacts with EPB41; regulates small intestinal calcium absorption through regulation of membrane expression of ATP2B1. Isoform B: Ubiquitously expressed. Isoform C: Found in brain cortex, skeletal muscle and heart muscle. Isoform D: Has only been found in fetal skeletal muscle. Isoform K: Found in small intestine and liver. Abundantly expressed in the endometrial epithelial cells and glandular epithelial cells in early-proliferative phase and early-secretory phases.

It localises to the cell membrane. The protein localises to the basolateral cell membrane. Its subcellular location is the synapse. The protein resides in the presynaptic cell membrane. It is found in the cytoplasmic vesicle. It localises to the secretory vesicle. The protein localises to the synaptic vesicle membrane. It catalyses the reaction Ca(2+)(in) + ATP + H2O = Ca(2+)(out) + ADP + phosphate + H(+). Its function is as follows. Catalyzes the hydrolysis of ATP coupled with the transport of calcium from the cytoplasm to the extracellular space thereby maintaining intracellular calcium homeostasis. Plays a role in blood pressure regulation through regulation of intracellular calcium concentration and nitric oxide production leading to regulation of vascular smooth muscle cells vasoconstriction. Positively regulates bone mineralization through absorption of calcium from the intestine. Plays dual roles in osteoclast differentiation and survival by regulating RANKL-induced calcium oscillations in preosteoclasts and mediating calcium extrusion in mature osteoclasts. Regulates insulin sensitivity through calcium/calmodulin signaling pathway by regulating AKT1 activation and NOS3 activation in endothelial cells. May play a role in synaptic transmission by modulating calcium and proton dynamics at the synaptic vesicles. In Homo sapiens (Human), this protein is Plasma membrane calcium-transporting ATPase 1.